The sequence spans 593 residues: Vitamin H transporter (593 aa).

The Extracellular portion of the chain corresponds to 1 to 121 (MTISNKSWRS…TTQTKAERRL (121 aa)). Phosphoserine occurs at positions 32, 33, and 43. A helical transmembrane segment spans residues 122-142 (LYKLDIIIALYFFMLCWSKSV). Residues 143 to 166 (DLNNYTNAYVSNMKEDLNMKGNDY) are Cytoplasmic-facing. A helical transmembrane segment spans residues 167-187 (VYTSTIANVGAIVFQLPFMYL). Topologically, residues 188–190 (LPR) are extracellular. The chain crosses the membrane as a helical span at residues 191-211 (FPSHIILPVMDLGWTWFTFAC). Residues 212-224 (YRANSLAELRAYR) are Cytoplasmic-facing. Residues 225-245 (FILSAFGAAYYPVSQYILGCW) traverse the membrane as a helical segment. Topologically, residues 246 to 291 (YAPDEINSRVCLFFCGQQLGSVTSGLLQSRIFKSLNGVHGLAGWRW) are extracellular. A helical membrane pass occupies residues 292 to 312 (MFLIDAIAISLPTAIIGFFVI). Residues 313 to 361 (PGVPSKCYSLFLTDEEIRIARARNKRNQIKDGVDKSKLAPLWSRKLWKK) are Cytoplasmic-facing. Residues 362–382 (VFCTPAFWVLVVFDTCSWNNM) traverse the membrane as a helical segment. Residues 383 to 408 (TAYSGSYTLWLKSNTKYSIAQVNNLS) lie on the Extracellular side of the membrane. A helical transmembrane segment spans residues 409–429 (VIPACLGFAYVIFCAFGADLF). The Cytoplasmic portion of the chain corresponds to 430-432 (RCK). The chain crosses the membrane as a helical span at residues 433–453 (WIFMVFAAIMNTVSCALLIKW). At 454-460 (DIPSKAK) the chain is on the extracellular side. The helical transmembrane segment at 461–481 (WYAFFTTYFSVAASPCLWSFI) threads the bilayer. The Cytoplasmic segment spans residues 482–492 (NDFLRFDPQVK). The chain crosses the membrane as a helical span at residues 493–513 (AITWIAIYSFSQSTYAWIPTL). Residues 514–526 (AWPTVESPRFKTG) are Extracellular-facing. A helical membrane pass occupies residues 527–547 (YTVSLIFGAIYGLWTFVVLFF). Residues 548 to 593 (YKRNEKKHALGNGIILYDSNKGEELPEFVKKNMEERDGYYYLKRSS) are Cytoplasmic-facing.

This sequence belongs to the major facilitator superfamily. Allantoate permease family.

The protein localises to the cell membrane. Its function is as follows. Involved in uptake of biotin with the concomitant entry of protons. The polypeptide is Vitamin H transporter (VHT1) (Saccharomyces cerevisiae (strain ATCC 204508 / S288c) (Baker's yeast)).